The primary structure comprises 406 residues: Bifunctional enzyme IspD/IspF (406 aa).

The interval 1 to 247 is 2-C-methyl-D-erythritol 4-phosphate cytidylyltransferase; that stretch reads MSLIRVNGEA…ALFFNPAKDT (247 aa). The tract at residues 248–406 is 2-C-methyl-D-erythritol 2,4-cyclodiphosphate synthase; that stretch reads FIGMGFDTHA…HVSMRYKQKL (159 aa). Residues Asp254 and His256 each coordinate a divalent metal cation. 4-CDP-2-C-methyl-D-erythritol 2-phosphate contacts are provided by residues 254 to 256 and 280 to 281; these read DTH and HS. A divalent metal cation is bound at residue His288. 4-CDP-2-C-methyl-D-erythritol 2-phosphate is bound by residues 302-304, 307-311, 378-381, Phe385, and Lys388; these read DIG, FPDND, and TTME.

It in the N-terminal section; belongs to the IspD/TarI cytidylyltransferase family. IspD subfamily. This sequence in the C-terminal section; belongs to the IspF family. Requires a divalent metal cation as cofactor.

It catalyses the reaction 2-C-methyl-D-erythritol 4-phosphate + CTP + H(+) = 4-CDP-2-C-methyl-D-erythritol + diphosphate. It carries out the reaction 4-CDP-2-C-methyl-D-erythritol 2-phosphate = 2-C-methyl-D-erythritol 2,4-cyclic diphosphate + CMP. The protein operates within isoprenoid biosynthesis; isopentenyl diphosphate biosynthesis via DXP pathway; isopentenyl diphosphate from 1-deoxy-D-xylulose 5-phosphate: step 2/6. Its pathway is isoprenoid biosynthesis; isopentenyl diphosphate biosynthesis via DXP pathway; isopentenyl diphosphate from 1-deoxy-D-xylulose 5-phosphate: step 4/6. Functionally, bifunctional enzyme that catalyzes the formation of 4-diphosphocytidyl-2-C-methyl-D-erythritol from CTP and 2-C-methyl-D-erythritol 4-phosphate (MEP) (IspD), and catalyzes the conversion of 4-diphosphocytidyl-2-C-methyl-D-erythritol 2-phosphate (CDP-ME2P) to 2-C-methyl-D-erythritol 2,4-cyclodiphosphate (ME-CPP) with a corresponding release of cytidine 5-monophosphate (CMP) (IspF). The protein is Bifunctional enzyme IspD/IspF of Helicobacter pylori (strain Shi470).